The sequence spans 423 residues: Acaloleptin A (423 aa).

Residues Met-1–Gly-17 form the signal peptide. Residues Leu-18–Arg-26 constitute a propeptide that is removed on maturation. 4 disordered regions span residues Leu-28 to Thr-58, Ile-108 to Asn-128, Asn-180 to Arg-203, and Ser-355 to Asp-385. Positions Asn-34–Gln-43 are enriched in polar residues. A compositionally biased stretch (polar residues) spans Asn-180–Gln-189. Positions Asp-357–Gln-366 are enriched in acidic residues. The span at Arg-376–Asp-385 shows a compositional bias: basic and acidic residues.

The protein belongs to the coleoptericin family. Hemolymph (at protein level). Larval fat body.

The protein resides in the secreted. In terms of biological role, acaloleptins A1-A4 show antibacterial activity against Gram-negative bacteria but not against Gram-positive bacteria. Acaloleptin A5 shows antibacterial activity against Gram-positive bacteria but not against Gram-negative bacteria, and may also have antifungal activity. This is Acaloleptin A from Acalolepta luxuriosa (Udo longhorn beetle).